Reading from the N-terminus, the 238-residue chain is Orotidine 5'-phosphate decarboxylase (238 aa).

Substrate contacts are provided by residues aspartate 18, lysine 40, 67-76, threonine 122, arginine 183, glutamine 192, and arginine 213; that span reads DMKLLDIDNT. Residue lysine 69 is the Proton donor of the active site.

This sequence belongs to the OMP decarboxylase family. Type 1 subfamily. Homodimer.

It catalyses the reaction orotidine 5'-phosphate + H(+) = UMP + CO2. It functions in the pathway pyrimidine metabolism; UMP biosynthesis via de novo pathway; UMP from orotate: step 2/2. Functionally, catalyzes the decarboxylation of orotidine 5'-monophosphate (OMP) to uridine 5'-monophosphate (UMP). The sequence is that of Orotidine 5'-phosphate decarboxylase from Brucella canis (strain ATCC 23365 / NCTC 10854 / RM-666).